The primary structure comprises 203 residues: Amelogenin, Y isoform (203 aa).

Residues 1-16 (MGTWILFACLVGAAFA) form the signal peptide. The disordered stretch occupies residues 116–180 (MPVPGQQSMT…PPLPPMFPMR (65 aa)). The span at 120–130 (GQQSMTPTQHH) shows a compositional bias: polar residues. Low complexity predominate over residues 131–142 (QPNLPLPAQQPF). Positions 143 to 180 (QPQPVQPLPHQPMQPQPPVQPMQPLLPQPPLPPMFPMR) are enriched in pro residues.

The protein belongs to the amelogenin family.

It localises to the secreted. The protein resides in the extracellular space. It is found in the extracellular matrix. Its function is as follows. Plays a role in biomineralization. Seems to regulate the formation of crystallites during the secretory stage of tooth enamel development. Thought to play a major role in the structural organization and mineralization of developing enamel. This chain is Amelogenin, Y isoform (AMELY), found in Pan troglodytes (Chimpanzee).